The chain runs to 195 residues: Imidazoleglycerol-phosphate dehydratase (195 aa).

The protein belongs to the imidazoleglycerol-phosphate dehydratase family.

It localises to the cytoplasm. It carries out the reaction D-erythro-1-(imidazol-4-yl)glycerol 3-phosphate = 3-(imidazol-4-yl)-2-oxopropyl phosphate + H2O. Its pathway is amino-acid biosynthesis; L-histidine biosynthesis; L-histidine from 5-phospho-alpha-D-ribose 1-diphosphate: step 6/9. This Burkholderia vietnamiensis (strain G4 / LMG 22486) (Burkholderia cepacia (strain R1808)) protein is Imidazoleglycerol-phosphate dehydratase.